The primary structure comprises 432 residues: 2-oxoglutarate-dependent dioxygenase AOP2 (432 aa).

One can recognise a Fe2OG dioxygenase domain in the interval 281-378 (SGDDVEANDD…RYTAAIFTCP (98 aa)). Residues H301, D303, and H358 each contribute to the Fe cation site. A 2-oxoglutarate-binding site is contributed by R369.

It belongs to the iron/ascorbate-dependent oxidoreductase family. Fe(2+) serves as cofactor.

2-oxoglutarate-dependent dioxygenase involved in glucosinolates biosynthesis. Catalyzes the conversion of methylsulfinylalkyl glucosinolates to alkenyl glucosinolates. The sequence is that of 2-oxoglutarate-dependent dioxygenase AOP2 (AOP2) from Arabidopsis thaliana (Mouse-ear cress).